The primary structure comprises 236 residues: LexA repressor (236 aa).

A disordered region spans residues 1–25 (MNDSNDTSVAGGAAGADSRVLSADS). The segment at residues 51 to 71 (IREIGDAVGLTSTSSVAHQLR) is a DNA-binding region (H-T-H motif). Active-site for autocatalytic cleavage activity residues include Ser-160 and Lys-197.

Belongs to the peptidase S24 family. Homodimer.

It carries out the reaction Hydrolysis of Ala-|-Gly bond in repressor LexA.. Its function is as follows. Represses a number of genes involved in the response to DNA damage (SOS response), including recA and lexA. In the presence of single-stranded DNA, RecA interacts with LexA causing an autocatalytic cleavage which disrupts the DNA-binding part of LexA, leading to derepression of the SOS regulon and eventually DNA repair. This Mycobacterium bovis (strain BCG / Pasteur 1173P2) protein is LexA repressor.